The chain runs to 58 residues: Large ribosomal subunit protein bL32 (58 aa).

It belongs to the bacterial ribosomal protein bL32 family.

This Synechococcus sp. (strain WH7803) protein is Large ribosomal subunit protein bL32.